The primary structure comprises 117 residues: Translation initiation factor 1A (117 aa).

The S1-like domain maps to 17-92; it reads IRVPLPDRSK…ERGDIVYRYT (76 aa).

This sequence belongs to the eIF-1A family.

Functionally, seems to be required for maximal rate of protein biosynthesis. Enhances ribosome dissociation into subunits and stabilizes the binding of the initiator Met-tRNA(I) to 40 S ribosomal subunits. This chain is Translation initiation factor 1A, found in Thermococcus kodakarensis (strain ATCC BAA-918 / JCM 12380 / KOD1) (Pyrococcus kodakaraensis (strain KOD1)).